The primary structure comprises 271 residues: MSVVSLLGVNVMNNPAKFTDKYLFEITFECLEHLEKDLEWKLTYVGSATSDNYDQELDSLLVGPIPVGVNKFIFEAEPPDTKRIPIDELLGVTVILLTCAYDGREFVRVGYYVNNEYESEELINDPPPKPVIEKIRRNVLAEKPRVTRFAIKWDSEASAPPEFPPEQPEADEVADEEEYGADELAEQSSIADPAVNGGMEVEGQPNGAIVIEEDEMSEDGSVDLENESEDELDGEGDAEGELEQGQDEDIEMGDEMEIDDHPKQQGMAMAQ.

Residues 152–271 (KWDSEASAPP…PKQQGMAMAQ (120 aa)) are disordered. Acidic residues-rich tracts occupy residues 168 to 185 (PEADEVADEEEYGADELA) and 211 to 258 (IEED…EMEI).

The protein belongs to the ASF1 family. Interacts with histone H3 and histone H4.

The protein localises to the nucleus. Its function is as follows. Histone chaperone that facilitates histone deposition and histone exchange and removal during nucleosome assembly and disassembly. This is Histone chaperone asf-1 (asf-1) from Neurospora crassa (strain ATCC 24698 / 74-OR23-1A / CBS 708.71 / DSM 1257 / FGSC 987).